The primary structure comprises 2289 residues: Protein Ycf2 (2289 aa).

1643–1650 (GSIGTGRS) is an ATP binding site.

It belongs to the Ycf2 family.

The protein resides in the plastid. It localises to the chloroplast stroma. Probable ATPase of unknown function. Its presence in a non-photosynthetic plant (Epifagus virginiana) and experiments in tobacco indicate that it has an essential function which is probably not related to photosynthesis. This Capsella bursa-pastoris (Shepherd's purse) protein is Protein Ycf2.